The chain runs to 721 residues: Protein quick-to-court (721 aa).

Disordered stretches follow at residues 1-42 (MMTS…RIPH), 143-210 (VGNS…ASVA), 360-379 (SSPE…EAEL), 393-428 (DEGN…MQSS), and 441-471 (SSVH…CGAG). The segment covering 17–31 (QVQREKDNDSAEDSH) has biased composition (basic and acidic residues). A compositionally biased stretch (low complexity) spans 161–201 (NGGSDISSSGTSSSSSNNKESSPRTTRTPRTPQTPQTPQTP). Basic and acidic residues predominate over residues 362–379 (PEERSASSDAVTVREAEL). A compositionally biased stretch (low complexity) spans 406 to 420 (RQQQQQANHSLQAMQ). A compositionally biased stretch (polar residues) spans 441 to 454 (SSVHSKDSQTQSEA). Positions 511 to 569 (KRSHNDKVEALLQKLAECNTRYSDMVPDYEQAKQRIRELEKQLEDLQRKLIEHEEKQNK) form a coiled coil. Positions 668–716 (HVDPEVTLQFLKSAIFYFLTDKENSQGHLQAIESILEFTDAEKQKISAA) constitute a GRIP domain.

Expressed in the third antennal segment and the maxillary palp, with increased expression near the cuticle of both olfactory organs. Also detected in the second antenna segment. In the brain, expressed in the central nervous system, with high levels of expression in the visual system including the retina and optic lobe, and uniform expression in the cortex. Detected in the thorax and abdomen, with increased expression in the ventral ganglion. In males, detected in the reproductive tract including the ejaculatory bulb and testis.

In adult males, modulates sexual behavior by playing a role in sex discrimination and maintaining normal levels of sexual activity towards both males and females. The chain is Protein quick-to-court from Drosophila melanogaster (Fruit fly).